We begin with the raw amino-acid sequence, 101 residues long: Urease subunit beta (101 aa).

Belongs to the urease beta subunit family. Heterotrimer of UreA (gamma), UreB (beta) and UreC (alpha) subunits. Three heterotrimers associate to form the active enzyme.

The protein localises to the cytoplasm. The enzyme catalyses urea + 2 H2O + H(+) = hydrogencarbonate + 2 NH4(+). It functions in the pathway nitrogen metabolism; urea degradation; CO(2) and NH(3) from urea (urease route): step 1/1. This Allorhizobium ampelinum (strain ATCC BAA-846 / DSM 112012 / S4) (Agrobacterium vitis (strain S4)) protein is Urease subunit beta.